Here is a 181-residue protein sequence, read N- to C-terminus: Ribonuclease M5 (181 aa).

Positions 3-86 (KEVIVVEGRD…AYISQEEGTK (84 aa)) constitute a Toprim domain. Residues glutamate 9, aspartate 55, and aspartate 57 each contribute to the Mg(2+) site.

Belongs to the ribonuclease M5 family. It depends on Mg(2+) as a cofactor.

It localises to the cytoplasm. The enzyme catalyses Endonucleolytic cleavage of RNA, removing 21 and 42 nucleotides, respectively, from the 5'- and 3'-termini of a 5S-rRNA precursor.. Required for correct processing of both the 5' and 3' ends of 5S rRNA precursor. Cleaves both sides of a double-stranded region yielding mature 5S rRNA in one step. This is Ribonuclease M5 from Clostridium botulinum (strain Hall / ATCC 3502 / NCTC 13319 / Type A).